The primary structure comprises 288 residues: Coiled-coil domain-containing protein 190 (288 aa).

Positions 16-69 (LERKSARQAEARLSLRLQRLEIICLYHVKSLAREQRQLQKELQRLQQDIIKKRF) form a coiled coil. A disordered region spans residues 141–235 (GERTSCFKEG…SSVDYAGSFK (95 aa)). Positions 177-188 (HDQELSTNKTED) are enriched in basic and acidic residues. Polar residues predominate over residues 203–213 (ANETRSENASQ).

The polypeptide is Coiled-coil domain-containing protein 190 (Ccdc190) (Mus musculus (Mouse)).